The following is a 622-amino-acid chain: Transcription factor SKN7 (622 aa).

Positions 1 to 12 (MSFSTINSNVNK) are enriched in polar residues. Positions 1-29 (MSFSTINSNVNKTTGDSNNNTTENSSTAD) are disordered. Over residues 13–27 (TTGDSNNNTTENSST) the composition is skewed to low complexity. The tract at residues 84–190 (ANEFVRKLFR…GLDNIKRKIP (107 aa)) is DNA-binding domain. The interval 212–303 (TNPNNPSGSL…NNFNTLCSTL (92 aa)) is hydrophobic repeat HR-A/B. Residues 240–260 (FGNLRRRVDKLQKELDMSKME) are a coiled coil. The Response regulatory domain maps to 378 to 492 (HVLLVEDDAV…DLHSILIRYL (115 aa)). D427 carries the 4-aspartylphosphate modification. 2 disordered regions span residues 501–579 (QQLP…QHHN) and 599–622 (TVPH…NQLS). The segment covering 512 to 527 (THSNTNTANSNPNTIN) has biased composition (low complexity). A compositionally biased stretch (polar residues) spans 537 to 554 (DNPSTTTPVTPGASISSA). Low complexity predominate over residues 555–578 (QHVQQGQQEQQHQIFHAQQQQQHH). The span at 600-622 (VPHSSMGSTPQLPQSTLQENQLS) shows a compositional bias: polar residues.

It belongs to the SKN7 family. As to quaternary structure, homotrimer. The phosphorelay mechanism involves the sequential transfer of a phosphate group from 'His-576' (H1) to 'Asp-1144' (D1) of SLN1, then to 'His-64' (H2) of YPD1 and finally to Asp-427 (D2) of SKN7.

It is found in the nucleus. Functionally, transcription factor that is part of a SLN1-YPD1-SKN7 two-component regulatory system, which controls gene expression in response to changes in the osmolarity of the extracellular environment. Under low osmotic conditions, phosphorylated and activated by the phosphorelay intermediate protein YPD1. Also activated in response to oxidative stress, independent on the two-component regulatory system. Regulates heat shock genes in response to oxidative stress and genes involved in cell wall integrity in response to osmotic changes. In Saccharomyces cerevisiae (strain ATCC 204508 / S288c) (Baker's yeast), this protein is Transcription factor SKN7 (SKN7).